The primary structure comprises 921 residues: Retinoblastoma-associated protein (921 aa).

The disordered stretch occupies residues Met-1–Leu-36. Pro-2 bears the N,N-dimethylproline; by NTM1 mark. Phosphoserine is present on residues Ser-31 and Ser-243. Phosphothreonine occurs at positions 246, 350, 364, and 367. Residues Pro-341 to Ala-360 are disordered. The span at Glu-346–Pro-356 shows a compositional bias: basic and acidic residues. Residues Thr-367–Gly-573 are domain A. The pocket; binds T and E1A stretch occupies residues Thr-367 to Tyr-764. A Phosphoserine; by CDK2 modification is found at Ser-561. The interval Glu-574–Gln-632 is spacer. Phosphoserine occurs at positions 601, 605, and 617. The segment at Lys-633–Tyr-764 is domain B. Positions Arg-756–Lys-921 are interaction with LIMD1. The tract at residues Tyr-764–Lys-921 is domain; mediates interaction with E4F1. 4 positions are modified to phosphoserine: Ser-773, Ser-781, Ser-788, and Ser-800. At Lys-803 the chain carries N6-methyllysine; by SMYD2. At Ser-804 the chain carries Phosphoserine. A phosphothreonine mark is found at Thr-814, Thr-816, Thr-819, and Thr-834. A Phosphoserine modification is found at Ser-848. Lys-853 carries the N6-methyllysine; by SMYD2 modification. The Bipartite nuclear localization signal signature appears at Lys-853–Arg-869. Residues Lys-866 and Lys-867 each carry the N6-acetyllysine; by PCAF modification. The disordered stretch occupies residues Ile-872 to Lys-921. Basic and acidic residues predominate over residues Arg-908–Lys-921.

It belongs to the retinoblastoma protein (RB) family. In terms of assembly, the hypophosphorylated form interacts with and sequesters the E2F1 transcription factor, thereby inhibiting E2F1 transcription. Interacts with heterodimeric E2F/DP transcription factor complexes containing TFDP1 and either E2F1/E2F, E2F3, E2F4 or E2F5, or TFDP2 and E2F4. Interacts (when hyperphosphorylated and hypophosphorylated) with PKP3; the interaction inhibits RB1 interaction with and repression of the transcription factor E2F1, potentially via sequestering RB1 to the cytoplasm. The unphosphorylated form interacts with EID1, ARID3B, KDM5A, SUV39H1, MJD2A/JHDM3A and THOC1. Interacts with the N-terminal domain of TAF1. Interacts with SNW1, ATAD5, AATF, DNMT1, LIN9, LMNA, KMT5B, KMT5C, PELP1, UHRF2, TMPO-alpha and USP4. Interacts with GRIP1 and UBR4. Interacts with ARID4A and KDM5B. Interacts with E4F1 and LIMD1. Interacts with SMARCA4/BRG1 and HDAC1. Interacts with USP4. Interacts (when methylated at Lys-853) with L3MBTL1. Binds to CDK1 and CDK2. Interacts with CHEK2; phosphorylates RB1. Interacts with PRMT2. Interacts with CEBPA. P-TEFB complex interacts with RB1; promotes phosphorylation of RB1. Interacts with RBBP9; the interaction disrupts RB1 binding to E2F1. Interacts with KAT2B/PCAF and EP300/P300. Interacts with PAX5. Interacts (phosphorylated and unphosphorylated) with BLCAP. May interact with NDC80. (Microbial infection) Interacts with adenovirus E1a protein. As to quaternary structure, (Microbial infection) Interacts with SV40 large T antigen. Post-translationally, phosphorylated. Phosphorylated by CDK6 and CDK4, and subsequently by CDK2 at Ser-561 in G1, thereby releasing E2F1 which is then able to activate cell growth. Dephosphorylated at the late M phase. Phosphorylation of threonine residues in domain C promotes interaction between the C-terminal domain C and the Pocket domain, and thereby inhibits interactions with heterodimeric E2F/DP transcription factor complexes. Dephosphorylated at Ser-788 by calcineruin upon calcium stimulation. CDK3/cyclin-C-mediated phosphorylation at Ser-800 and Ser-804 is required for G0-G1 transition. Phosphorylated by CDK1 and CDK2 upon TGFB1-mediated apoptosis. Monomethylation at Lys-803 by SMYD2 enhances phosphorylation at Ser-800 and Ser-804, and promotes cell cycle progression. Monomethylation at Lys-853 by SMYD2 promotes interaction with L3MBTL1. N-terminus is methylated by METTL11A/NTM1. In terms of processing, acetylated in the skin. Acetylation at Lys-866 and Lys-867 regulates subcellular localization during keratinocytes differentiation. As to expression, expressed in the cell nuclei of renal tubules, hepatocytes and skeletal muscles. Expressed in skin (at protein level).

The protein resides in the nucleus. It localises to the cytoplasm. Its function is as follows. Tumor suppressor that is a key regulator of the G1/S transition of the cell cycle. The hypophosphorylated form binds transcription regulators of the E2F family, preventing transcription of E2F-responsive genes. Both physically blocks E2Fs transactivating domain and recruits chromatin-modifying enzymes that actively repress transcription. Cyclin and CDK-dependent phosphorylation of RB1 induces its dissociation from E2Fs, thereby activating transcription of E2F responsive genes and triggering entry into S phase. RB1 also promotes the G0-G1 transition upon phosphorylation and activation by CDK3/cyclin-C. Directly involved in heterochromatin formation by maintaining overall chromatin structure and, in particular, that of constitutive heterochromatin by stabilizing histone methylation. Recruits and targets histone methyltransferases SUV39H1, KMT5B and KMT5C, leading to epigenetic transcriptional repression. Controls histone H4 'Lys-20' trimethylation. Inhibits the intrinsic kinase activity of TAF1. Mediates transcriptional repression by SMARCA4/BRG1 by recruiting a histone deacetylase (HDAC) complex to the c-FOS promoter. In resting neurons, transcription of the c-FOS promoter is inhibited by BRG1-dependent recruitment of a phospho-RB1-HDAC1 repressor complex. Upon calcium influx, RB1 is dephosphorylated by calcineurin, which leads to release of the repressor complex. The protein is Retinoblastoma-associated protein (Rb1) of Mus musculus (Mouse).